Consider the following 469-residue polypeptide: Glutamate--tRNA ligase (469 aa).

A 'HIGH' region motif is present at residues 9-19 (PSPTGFLHVGG). Positions 98, 100, 125, and 127 each coordinate Zn(2+). Positions 236–240 (KLSKR) match the 'KMSKS' region motif. ATP is bound at residue K239.

The protein belongs to the class-I aminoacyl-tRNA synthetase family. Glutamate--tRNA ligase type 1 subfamily. As to quaternary structure, monomer. Zn(2+) is required as a cofactor.

It is found in the cytoplasm. The catalysed reaction is tRNA(Glu) + L-glutamate + ATP = L-glutamyl-tRNA(Glu) + AMP + diphosphate. Catalyzes the attachment of glutamate to tRNA(Glu) in a two-step reaction: glutamate is first activated by ATP to form Glu-AMP and then transferred to the acceptor end of tRNA(Glu). The chain is Glutamate--tRNA ligase from Shewanella sp. (strain MR-4).